The following is a 223-amino-acid chain: ATP phosphoribosyltransferase (223 aa).

This sequence belongs to the ATP phosphoribosyltransferase family. Short subfamily. Heteromultimer composed of HisG and HisZ subunits.

The protein localises to the cytoplasm. It catalyses the reaction 1-(5-phospho-beta-D-ribosyl)-ATP + diphosphate = 5-phospho-alpha-D-ribose 1-diphosphate + ATP. It functions in the pathway amino-acid biosynthesis; L-histidine biosynthesis; L-histidine from 5-phospho-alpha-D-ribose 1-diphosphate: step 1/9. Catalyzes the condensation of ATP and 5-phosphoribose 1-diphosphate to form N'-(5'-phosphoribosyl)-ATP (PR-ATP). Has a crucial role in the pathway because the rate of histidine biosynthesis seems to be controlled primarily by regulation of HisG enzymatic activity. This Halothermothrix orenii (strain H 168 / OCM 544 / DSM 9562) protein is ATP phosphoribosyltransferase.